A 210-amino-acid chain; its full sequence is Guanylate kinase (210 aa).

Residues 6–184 (GTLYIISAPS…ALQDLKCIIQ (179 aa)) enclose the Guanylate kinase-like domain. 13–20 (APSGAGKT) is a binding site for ATP.

Belongs to the guanylate kinase family.

It is found in the cytoplasm. The catalysed reaction is GMP + ATP = GDP + ADP. Its function is as follows. Essential for recycling GMP and indirectly, cGMP. The sequence is that of Guanylate kinase from Nitrosospira multiformis (strain ATCC 25196 / NCIMB 11849 / C 71).